Reading from the N-terminus, the 273-residue chain is Arginine and glutamate-rich protein 1 (273 aa).

Composition is skewed to basic residues over residues 1–29 (MGRS…RSRS) and 37–58 (VRKR…RSRS). A necessary and sufficient for RNA binding region spans residues 1 to 74 (MGRSRSRSSS…VSRRERDRER (74 aa)). Positions 1–113 (MGRSRSRSSS…EEKKAEFERQ (113 aa)) are disordered. A phosphoserine mark is found at serine 58 and serine 60. The residue at position 61 (threonine 61) is a Phosphothreonine. 2 stretches are compositionally biased toward basic and acidic residues: residues 66–84 (SRRE…RIDI) and 93–113 (SSLD…FERQ). Positions 75 to 273 (ASSPPDRIDI…KLSFSLKTQD (199 aa)) are necessary and sufficient for transcriptional regulation. Serine 76 and serine 77 each carry phosphoserine. Positions 172 to 176 (LLEEL) match the LXXLL motif 1; degenerate motif. The LXXLL motif 2; degenerate motif lies at 201-205 (LERIL). Residues 238–253 (MKLEQERQRQQKEEQK) show a composition bias toward basic and acidic residues. Residues 238 to 273 (MKLEQERQRQQKEEQKIILGKGKSRPKLSFSLKTQD) form a disordered region. The residue at position 266 (serine 266) is a Phosphoserine.

Belongs to the ARGLU1 family. In terms of assembly, interacts with MED1; the interaction is direct. Interacts with PUF60, U2AF2 and JMJD6; may interact with other proteins involved in RNA processing and splicing.

It is found in the nucleus. Its subcellular location is the nucleus speckle. It localises to the chromosome. In terms of biological role, dual function regulator of gene expression; regulator of transcription and modulator of alternative splicing. General coactivator of nuclear receptor-induced gene expression, including genes activated by the glucocorticoid receptor NR3C1. Binds to a subset of pre-mRNAs and to components of the spliceosome machinery to directly modulate basal alternative splicing; involved in simple and complex cassette exon splicing events. Binds its own pre-mRNA and regulates its alternative splicing and degradation; one of the alternatively spliced products is a stable intronic sequence RNA (sisRNA) that binds the protein to regulate its ability to affect splicing. Binding of the sisRNA stimulates phase separation and localization to nuclear speckles, which may contribute to activation of nuclear receptor-induced gene expression. May also indirectly modulate alternative splicing. Regulates transcription of genes involved in heart development, neuronal cell function, protein localization and chromatin localization. Regulates splicing of genes involved in neurogenesis and chromatin organization. Essential for central nervous system development. Required for the estrogen-dependent expression of ESR1 target genes. Can act in cooperation with MED1. The protein is Arginine and glutamate-rich protein 1 (ARGLU1) of Bos taurus (Bovine).